The chain runs to 447 residues: Pup--protein ligase 2 (447 aa).

Position 4 (Glu4) interacts with Mg(2+). Arg48 lines the ATP pocket. Tyr50 serves as a coordination point for Mg(2+). Asp52 (proton acceptor) is an active-site residue. Glu58 serves as a coordination point for Mg(2+). ATP-binding residues include Thr61 and Trp414.

It belongs to the Pup ligase/Pup deamidase family. Pup-conjugating enzyme subfamily.

The catalysed reaction is ATP + [prokaryotic ubiquitin-like protein]-L-glutamate + [protein]-L-lysine = ADP + phosphate + N(6)-([prokaryotic ubiquitin-like protein]-gamma-L-glutamyl)-[protein]-L-lysine.. The protein operates within protein degradation; proteasomal Pup-dependent pathway. It participates in protein modification; protein pupylation. Functionally, catalyzes the covalent attachment of the prokaryotic ubiquitin-like protein modifier Pup to the proteasomal substrate proteins, thereby targeting them for proteasomal degradation. This tagging system is termed pupylation. The ligation reaction involves the side-chain carboxylate of the C-terminal glutamate of Pup and the side-chain amino group of a substrate lysine. The polypeptide is Pup--protein ligase 2 (Rhodococcus erythropolis (Arthrobacter picolinophilus)).